A 448-amino-acid chain; its full sequence is Phosphoglucosamine mutase (448 aa).

Catalysis depends on serine 99, which acts as the Phosphoserine intermediate. Mg(2+) contacts are provided by serine 99, aspartate 238, aspartate 240, and aspartate 242. At serine 99 the chain carries Phosphoserine.

The protein belongs to the phosphohexose mutase family. Mg(2+) serves as cofactor. In terms of processing, activated by phosphorylation.

The catalysed reaction is alpha-D-glucosamine 1-phosphate = D-glucosamine 6-phosphate. Its function is as follows. Catalyzes the conversion of glucosamine-6-phosphate to glucosamine-1-phosphate. The chain is Phosphoglucosamine mutase from Marinomonas sp. (strain MWYL1).